A 708-amino-acid chain; its full sequence is O-antigen chain terminator bifunctional methyltransferase/kinase WbdD (708 aa).

The methyltransferase stretch occupies residues 1 to 210 (MTKDLNTLVS…VPRPMYLVSN (210 aa)). Residues 16–17 (YQ), arginine 36, glycine 61, 82–87 (DFQQEN), 108–111 (GRIE), and leucine 128 contribute to the S-adenosyl-L-methionine site. A kinase region spans residues 211–459 (HRVLINDFNQ…AKLPSAEQQR (249 aa)). ATP-binding positions include proline 229, histidine 237, 241 to 243 (RRY), lysine 252, glutamate 274, 309 to 311 (EKL), methionine 358, and aspartate 369. Residues 485-594 (AGSEALRGQI…EIEKIHRSRS (110 aa)) adopt a coiled-coil conformation. The required for membrane-binding stretch occupies residues 601–669 (YRYLGLQIHL…RLYRRMNPLP (69 aa)). The required for localizing WbdA to the membrane stretch occupies residues 687–708 (VMHPELLPPEVYEIYLKLTKNK).

This sequence belongs to the WbdD family. Interacts with WbdA.

It is found in the cell inner membrane. It carries out the reaction 3-O-phospho-alpha-D-Man-(1-&gt;2)-alpha-D-Man-(1-&gt;2)-[alpha-D-Man-(1-&gt;3)-alpha-D-Man-(1-&gt;3)-alpha-D-Man-(1-&gt;2)-alpha-D-Man-(1-&gt;2)](n)-alpha-D-Man-(1-&gt;3)-alpha-D-Man-(1-&gt;3)-alpha-D-Man-(1-&gt;3)-alpha-D-GlcNAc-di-trans,octa-cis-undecaprenyl diphosphate + S-adenosyl-L-methionine = 3-O-methylphospho-alpha-D-Man-(1-&gt;2)-alpha-D-Man-(1-&gt;2)-[alpha-D-Man-(1-&gt;3)-alpha-D-Man-(1-&gt;3)-alpha-D-Man-(1-&gt;2)-alpha-D-Man-(1-&gt;2)](n)-alpha-D-Man-(1-&gt;3)-alpha-D-Man-(1-&gt;3)-alpha-D-Man-(1-&gt;3)-alpha-D-GlcNAc-di-trans,octa-cis-undecaprenyl diphosphate + S-adenosyl-L-homocysteine. It catalyses the reaction alpha-D-Man-(1-&gt;2)-alpha-D-Man-(1-&gt;2)-[alpha-D-Man-(1-&gt;3)-alpha-D-Man-(1-&gt;3)-alpha-D-Man-(1-&gt;2)-alpha-D-Man-(1-&gt;2)](n)-alpha-D-Man-(1-&gt;3)-alpha-D-Man-(1-&gt;3)-alpha-D-Man-(1-&gt;3)-alpha-D-GlcNAc-di-trans,octa-cis-undecaprenyl diphosphate + ATP = 3-O-phospho-alpha-D-Man-(1-&gt;2)-alpha-D-Man-(1-&gt;2)-[alpha-D-Man-(1-&gt;3)-alpha-D-Man-(1-&gt;3)-alpha-D-Man-(1-&gt;2)-alpha-D-Man-(1-&gt;2)](n)-alpha-D-Man-(1-&gt;3)-alpha-D-Man-(1-&gt;3)-alpha-D-Man-(1-&gt;3)-alpha-D-GlcNAc-di-trans,octa-cis-undecaprenyl diphosphate + ADP + H(+). It participates in bacterial outer membrane biogenesis; LPS O-antigen biosynthesis. Regulates the length of the LPS O-antigen polysaccharide chain. Stops the polymerization of the chain by phosphorylating and then methylating the phosphate on the terminal sugar. This terminal modification is essential for export of the O-antigen across the inner membrane. WbdD is also required for correct localization of the WbdA mannosyltransferase. The sequence is that of O-antigen chain terminator bifunctional methyltransferase/kinase WbdD from Escherichia coli.